A 148-amino-acid chain; its full sequence is Probable TtuB-protein conjugate cleaving protease (148 aa).

The region spanning H22–L148 is the MPN domain. Catalysis depends on E47, which acts as the Proton donor/acceptor. 3 residues coordinate Zn(2+): H101, H103, and D114. The JAMM motif motif lies at H101 to D114.

Belongs to the peptidase M67B family. Zn(2+) serves as cofactor.

In terms of biological role, probable metalloprotease that cleaves the ubiquitin-like modifier protein TtuB from protein conjugates, hydrolyzing the isopeptide bond between a lysine residue of the target protein and the C-terminal glycine of the modifier protein. Does not seem to work for all the TtuB conjugates. This Thermus thermophilus (strain ATCC BAA-163 / DSM 7039 / HB27) protein is Probable TtuB-protein conjugate cleaving protease.